Here is a 204-residue protein sequence, read N- to C-terminus: Thymidylate kinase (204 aa).

Residue 7–14 participates in ATP binding; the sequence is GGEGVGKT.

This sequence belongs to the thymidylate kinase family.

It carries out the reaction dTMP + ATP = dTDP + ADP. Phosphorylation of dTMP to form dTDP in both de novo and salvage pathways of dTTP synthesis. This Synechococcus sp. (strain JA-3-3Ab) (Cyanobacteria bacterium Yellowstone A-Prime) protein is Thymidylate kinase.